The chain runs to 346 residues: Uroporphyrinogen decarboxylase (346 aa).

Substrate-binding positions include 26–30, aspartate 76, tyrosine 153, serine 208, and histidine 323; that span reads RQAGR.

It belongs to the uroporphyrinogen decarboxylase family. Homodimer.

The protein resides in the cytoplasm. The catalysed reaction is uroporphyrinogen III + 4 H(+) = coproporphyrinogen III + 4 CO2. The protein operates within porphyrin-containing compound metabolism; protoporphyrin-IX biosynthesis; coproporphyrinogen-III from 5-aminolevulinate: step 4/4. Its function is as follows. Catalyzes the decarboxylation of four acetate groups of uroporphyrinogen-III to yield coproporphyrinogen-III. This is Uroporphyrinogen decarboxylase from Prochlorococcus marinus (strain AS9601).